The sequence spans 69 residues: MAKATKKAEAKTVTIEQIGSPIRRPDVQQRTLIGLGLNKMHRRRTLEDTPSVRGMIRAVQHLVRVVDEK.

This sequence belongs to the universal ribosomal protein uL30 family. Part of the 50S ribosomal subunit.

The protein is Large ribosomal subunit protein uL30 of Rhizobium etli (strain CIAT 652).